The chain runs to 342 residues: S-adenosylmethionine:tRNA ribosyltransferase-isomerase (342 aa).

It belongs to the QueA family. Monomer.

Its subcellular location is the cytoplasm. The enzyme catalyses 7-aminomethyl-7-carbaguanosine(34) in tRNA + S-adenosyl-L-methionine = epoxyqueuosine(34) in tRNA + adenine + L-methionine + 2 H(+). The protein operates within tRNA modification; tRNA-queuosine biosynthesis. Transfers and isomerizes the ribose moiety from AdoMet to the 7-aminomethyl group of 7-deazaguanine (preQ1-tRNA) to give epoxyqueuosine (oQ-tRNA). The polypeptide is S-adenosylmethionine:tRNA ribosyltransferase-isomerase (Geobacillus sp. (strain WCH70)).